The sequence spans 219 residues: Proline-rich protein 27 (219 aa).

An N-terminal signal peptide occupies residues 1–15; the sequence is MKLLLWACIVCVAFA. The segment covering 155–204 has biased composition (low complexity); it reads AAEPAAEAPVGAEPAAEAPVAAEPAAEAPVGVEPAAEEPSPAEPATAKPA. The disordered stretch occupies residues 155–219; that stretch reads AAEPAAEAPV…PSPSLEQANQ (65 aa).

Its subcellular location is the secreted. The protein is Proline-rich protein 27 (PRR27) of Homo sapiens (Human).